Consider the following 279-residue polypeptide: Ribosomal RNA small subunit methyltransferase A (279 aa).

Residues histidine 11, leucine 13, glycine 42, glutamate 63, aspartate 88, and asparagine 104 each coordinate S-adenosyl-L-methionine.

It belongs to the class I-like SAM-binding methyltransferase superfamily. rRNA adenine N(6)-methyltransferase family. RsmA subfamily.

Its subcellular location is the cytoplasm. The enzyme catalyses adenosine(1518)/adenosine(1519) in 16S rRNA + 4 S-adenosyl-L-methionine = N(6)-dimethyladenosine(1518)/N(6)-dimethyladenosine(1519) in 16S rRNA + 4 S-adenosyl-L-homocysteine + 4 H(+). In terms of biological role, specifically dimethylates two adjacent adenosines (A1518 and A1519) in the loop of a conserved hairpin near the 3'-end of 16S rRNA in the 30S particle. May play a critical role in biogenesis of 30S subunits. The polypeptide is Ribosomal RNA small subunit methyltransferase A (Synechococcus sp. (strain JA-3-3Ab) (Cyanobacteria bacterium Yellowstone A-Prime)).